Consider the following 471-residue polypeptide: Ribulose bisphosphate carboxylase large chain (471 aa).

2 residues coordinate substrate: asparagine 115 and threonine 165. Lysine 167 acts as the Proton acceptor in catalysis. A substrate-binding site is contributed by lysine 169. The Mg(2+) site is built by lysine 193, aspartate 195, and glutamate 196. Lysine 193 carries the N6-carboxylysine modification. Residue histidine 286 is the Proton acceptor of the active site. Residues arginine 287, histidine 319, and serine 371 each contribute to the substrate site.

The protein belongs to the RuBisCO large chain family. Type I subfamily. In terms of assembly, heterohexadecamer of 8 large chains and 8 small chains. It depends on Mg(2+) as a cofactor.

It localises to the carboxysome. The catalysed reaction is 2 (2R)-3-phosphoglycerate + 2 H(+) = D-ribulose 1,5-bisphosphate + CO2 + H2O. The enzyme catalyses D-ribulose 1,5-bisphosphate + O2 = 2-phosphoglycolate + (2R)-3-phosphoglycerate + 2 H(+). Functionally, ruBisCO catalyzes two reactions: the carboxylation of D-ribulose 1,5-bisphosphate, the primary event in carbon dioxide fixation, as well as the oxidative fragmentation of the pentose substrate in the photorespiration process. Both reactions occur simultaneously and in competition at the same active site. The polypeptide is Ribulose bisphosphate carboxylase large chain (Synechococcus sp. (strain WH7803)).